Here is an 898-residue protein sequence, read N- to C-terminus: Aconitate hydratase 1 (898 aa).

Ala-2 carries the post-translational modification N-acetylalanine. Residues Gln-90 and 209-211 each bind substrate; that span reads DSH. The [4Fe-4S] cluster site is built by Cys-441, Cys-507, and Cys-510. Residues Arg-540, Arg-545, Arg-703, and 784–785 contribute to the substrate site; that span reads SR.

Belongs to the aconitase/IPM isomerase family. Monomer. [4Fe-4S] cluster is required as a cofactor. Mostly expressed in roots, stems and leaves, also present in stems and flowers.

The protein resides in the cytoplasm. It is found in the mitochondrion. It catalyses the reaction citrate = D-threo-isocitrate. The protein operates within carbohydrate metabolism; tricarboxylic acid cycle; isocitrate from oxaloacetate: step 2/2. Functionally, catalyzes the isomerization of citrate to isocitrate via cis-aconitate. Contributes to oxidative stress tolerance. May have a role in respiration. This chain is Aconitate hydratase 1, found in Arabidopsis thaliana (Mouse-ear cress).